A 229-amino-acid polypeptide reads, in one-letter code: Aldehyde oxidoreductase iron-sulfur-binding subunit PaoA (229 aa).

Residues 1–21 (MSNQGEYPEDNRVGKHEPHDL) are disordered. A signal peptide (tat-type signal) is located at residues 1-53 (MSNQGEYPEDNRVGKHEPHDLSLTRRDLIKVSAATAATAVVYPHSTLAASVPA). Basic and acidic residues predominate over residues 9–21 (EDNRVGKHEPHDL). In terms of domain architecture, 2Fe-2S ferredoxin-type spans 61 to 137 (MPLTLKVNGK…GAEITTIEGL (77 aa)). [2Fe-2S] cluster contacts are provided by Cys99, Cys104, Gly105, Cys107, Cys119, Cys158, Cys161, Cys208, and Cys210.

In terms of assembly, heterotrimer composed of PaoA, PaoB and PaoC. Requires [2Fe-2S] cluster as cofactor. Post-translationally, exported by the Tat system. The position of the signal peptide cleavage has not been experimentally proven.

The protein resides in the periplasm. It catalyses the reaction an aldehyde + A + H2O = a carboxylate + AH2 + H(+). With respect to regulation, the complex requires PaoD for activity. Oxidizes aldehydes to the corresponding carboxylic acids with a preference for aromatic aldehydes. It might play a role in the detoxification of aldehydes to avoid cell damage. The sequence is that of Aldehyde oxidoreductase iron-sulfur-binding subunit PaoA from Escherichia coli (strain K12).